The chain runs to 125 residues: Large-conductance mechanosensitive channel (125 aa).

The next 3 helical transmembrane spans lie at 19–39 (VGVI…KYII), 42–62 (FLGL…IGNA), and 66–86 (VGSF…VFLM).

It belongs to the MscL family. Homopentamer.

Its subcellular location is the cell membrane. Its function is as follows. Channel that opens in response to stretch forces in the membrane lipid bilayer. May participate in the regulation of osmotic pressure changes within the cell. The protein is Large-conductance mechanosensitive channel of Ligilactobacillus salivarius (strain UCC118) (Lactobacillus salivarius).